A 489-amino-acid polypeptide reads, in one-letter code: Glucose-6-phosphate isomerase (489 aa).

The Proton donor role is filled by Glu-309. Catalysis depends on residues His-340 and Lys-459.

Belongs to the GPI family.

It is found in the cytoplasm. The catalysed reaction is alpha-D-glucose 6-phosphate = beta-D-fructose 6-phosphate. It functions in the pathway carbohydrate biosynthesis; gluconeogenesis. The protein operates within carbohydrate degradation; glycolysis; D-glyceraldehyde 3-phosphate and glycerone phosphate from D-glucose: step 2/4. Functionally, catalyzes the reversible isomerization of glucose-6-phosphate to fructose-6-phosphate. The polypeptide is Glucose-6-phosphate isomerase (Idiomarina loihiensis (strain ATCC BAA-735 / DSM 15497 / L2-TR)).